A 156-amino-acid chain; its full sequence is Ribosomal RNA large subunit methyltransferase H (156 aa).

S-adenosyl-L-methionine-binding positions include L73, G104, and 123–128; that span reads LSPLTF.

The protein belongs to the RNA methyltransferase RlmH family. Homodimer.

The protein localises to the cytoplasm. The catalysed reaction is pseudouridine(1915) in 23S rRNA + S-adenosyl-L-methionine = N(3)-methylpseudouridine(1915) in 23S rRNA + S-adenosyl-L-homocysteine + H(+). Its function is as follows. Specifically methylates the pseudouridine at position 1915 (m3Psi1915) in 23S rRNA. In Thioalkalivibrio sulfidiphilus (strain HL-EbGR7), this protein is Ribosomal RNA large subunit methyltransferase H.